The following is a 346-amino-acid chain: Methylthioribose-1-phosphate isomerase (346 aa).

Residues 54 to 56 (RGA), R91, and Q192 each bind substrate. D233 serves as the catalytic Proton donor. A substrate-binding site is contributed by 243–244 (NK).

This sequence belongs to the eIF-2B alpha/beta/delta subunits family. MtnA subfamily.

It catalyses the reaction 5-(methylsulfanyl)-alpha-D-ribose 1-phosphate = 5-(methylsulfanyl)-D-ribulose 1-phosphate. The protein operates within amino-acid biosynthesis; L-methionine biosynthesis via salvage pathway; L-methionine from S-methyl-5-thio-alpha-D-ribose 1-phosphate: step 1/6. Catalyzes the interconversion of methylthioribose-1-phosphate (MTR-1-P) into methylthioribulose-1-phosphate (MTRu-1-P). The chain is Methylthioribose-1-phosphate isomerase from Yersinia pseudotuberculosis serotype O:1b (strain IP 31758).